Here is a 746-residue protein sequence, read N- to C-terminus: Long-chain-alcohol oxidase FAO3 (746 aa).

The helical transmembrane segment at 139–159 threads the bilayer; that stretch reads ILTPIRAAFVYIKVAFLFCFF. 233 to 248 serves as a coordination point for FAD; it reads CDVVVVGSGSGGGVAA. H677 serves as the catalytic Proton acceptor.

The protein belongs to the GMC oxidoreductase family.

It localises to the membrane. It catalyses the reaction a long-chain primary fatty alcohol + O2 = a long-chain fatty aldehyde + H2O2. Functionally, long-chain fatty alcohol oxidase involved in the omega-oxidation pathway of lipid degradation. This Arabidopsis thaliana (Mouse-ear cress) protein is Long-chain-alcohol oxidase FAO3 (FAO3).